Reading from the N-terminus, the 87-residue chain is Small ribosomal subunit protein eS21 (87 aa).

This sequence belongs to the eukaryotic ribosomal protein eS21 family. As to quaternary structure, component of the small ribosomal subunit. Mature ribosomes consist of a small (40S) and a large (60S) subunit. The 40S subunit contains about 33 different proteins and 1 molecule of RNA (18S). The 60S subunit contains about 49 different proteins and 3 molecules of RNA (25S, 5.8S and 5S).

It is found in the cytoplasm. Functionally, required for the processing of the 20S rRNA-precursor to mature 18S rRNA in a late step of the maturation of 40S ribosomal subunits. Has a physiological role leading to 18S rRNA stability. The chain is Small ribosomal subunit protein eS21 (RPS21) from Candida albicans (Yeast).